Reading from the N-terminus, the 171-residue chain is Odorant-binding protein 1b (171 aa).

Positions 1 to 19 (MMVKFLLLALVFGLAHVHA) are cleaved as a signal peptide. Disulfide bonds link Cys57–Cys61 and Cys76–Cys169.

Belongs to the calycin superfamily. Lipocalin family. In terms of assembly, may form a heterodimer with OBP1A. In terms of processing, the N-terminus may be blocked. In terms of tissue distribution, expressed in nasal mucosa (at protein level). Specifically detected in septal and lateral nasal glands.

The protein resides in the secreted. In terms of biological role, binds the chemical odorant 2-isobutyl-3-methoxypyrazine. This chain is Odorant-binding protein 1b, found in Mus musculus (Mouse).